We begin with the raw amino-acid sequence, 327 residues long: Gamma-resorcylate decarboxylase (327 aa).

2 residues coordinate Zn(2+): E8 and H10. F23, H164, and D287 together coordinate 2,6-dihydroxybenzoate. Zn(2+)-binding residues include H164 and D287. The active site involves D287.

Belongs to the metallo-dependent hydrolases superfamily. ACMSD family. In terms of assembly, homotetramer. Dimer of dimers. Zn(2+) serves as cofactor.

It carries out the reaction 2,6-dihydroxybenzoate + H(+) = resorcinol + CO2. It catalyses the reaction 2,3-dihydroxybenzoate + H(+) = catechol + CO2. Its pathway is aromatic compound metabolism. With respect to regulation, inhibited by CuCl(2), monoiodoacetate and diethylpyrocarbonate. Inhibited by 2,3-dihydroxybenzaldehyde, which is an analog of the substrate 2,3-dihydroxybenzoate. In terms of biological role, involved in the gamma-resorcylate (2,6-dihydroxybenzoate) catabolism. Catalyzes the reversible decarboxylation of gamma-resorcylate to resorcinol. The reaction is reversible, but equilibrium greatly favors the decarboxylation reaction. Also catalyzes the decarboxylation of 2,3-dihydroxybenzoate to catechol, but does not act on 2,4-dihydroxybenzoate, 2,5-dihydroxybenzoate, 3,4-dihydroxybenzoate, 3,5-dihydroxybenzoate, 2-hydroxybenzoate, or 3-hydroxybenzoate. Only resorcinol is carboxylated by the reverse reaction. This is Gamma-resorcylate decarboxylase from Rhizobium sp. (strain MTP-10005).